Reading from the N-terminus, the 152-residue chain is Putative aluminum-activated malate transporter 11 (152 aa).

Helical transmembrane passes span 48 to 68 and 78 to 98; these read VIHA…YFME and AIWA…VEGL.

The protein belongs to the aromatic acid exporter (TC 2.A.85) family.

Its subcellular location is the membrane. In terms of biological role, malate transporter. This is Putative aluminum-activated malate transporter 11 (ALMT11) from Arabidopsis thaliana (Mouse-ear cress).